A 141-amino-acid chain; its full sequence is Large ribosomal subunit protein bL17 (141 aa).

It belongs to the bacterial ribosomal protein bL17 family. Part of the 50S ribosomal subunit. Contacts protein L32.

The protein is Large ribosomal subunit protein bL17 of Agrobacterium fabrum (strain C58 / ATCC 33970) (Agrobacterium tumefaciens (strain C58)).